Reading from the N-terminus, the 1201-residue chain is Potassium channel subfamily T member 1 (1201 aa).

Residues 1 to 28 (MARAKLKNSPSESNSHVKTVPPATTEDV) are disordered. Residues 1–92 (MARAKLKNSP…FFIKNQRSSL (92 aa)) are Cytoplasmic-facing. Over residues 8 to 17 (NSPSESNSHV) the composition is skewed to polar residues. Residues 93 to 115 (RIRLFNFSLKLLTCLLYIVRVLL) traverse the membrane as a helical segment. The Extracellular portion of the chain corresponds to 116 to 152 (DNPEEGIGCWECEKQNYTLFNQSTKINWSHIFWVDRK). Residues N131 and N136 are each glycosylated (N-linked (GlcNAc...) asparagine). Residues 153 to 175 (LPLWAVQVSIALISFLETMLLIY) traverse the membrane as a helical segment. Residues 176 to 184 (LSYKGNIWE) lie on the Cytoplasmic side of the membrane. Residues 185–206 (QIFRISFILEMINTVPFIITIF) traverse the membrane as a helical segment. Residues 207–216 (WPPLRNLFIP) are Extracellular-facing. The helical transmembrane segment at 217 to 229 (VFLNCWLAKYALE) threads the bilayer. Topologically, residues 230–249 (NMINDLHRAIQRTQSAMFNQ) are cytoplasmic. The chain crosses the membrane as a helical span at residues 250 to 272 (VLILICTLLCLVFTGTCGIQHLE). Topologically, residues 273–279 (RAGEKLS) are extracellular. Positions 280–300 (LFKSFYFCIVTFSTVGYGDVT) form an intramembrane region, pore-forming. K(+) is bound by residues V294 and G295. Residues 301–304 (PKIW) lie on the Extracellular side of the membrane. A helical membrane pass occupies residues 305–326 (PSQLLVVIMICVALVVLPLQFE). The Cytoplasmic segment spans residues 327–1201 (ELVYLWMERQ…NPETRDETQL (875 aa)). The region spanning 350 to 486 (EKHVVLCVSS…FHVKFADHVV (137 aa)) is the RCK N-terminal 1 domain. 4 residues coordinate Na(+): L511, H514, S536, and N538. C750 and C751 together coordinate Zn(2+). 2 residues coordinate K(+): R753 and K756. Residues R753 and K756 each contribute to the Na(+) site. Zn(2+) contacts are provided by C758 and H760. 3 residues coordinate K(+): N761, Y769, and G770. F771 is a binding site for Na(+). The 141-residue stretch at 773 to 913 (NKLIIVSAET…QFRAKDSYSL (141 aa)) folds into the RCK N-terminal 2 domain. Residues S779, L810, D812, G834, and D857 each contribute to the K(+) site. The tract at residues 1175–1201 (NDGHSRKSSCSNKLGPCNPETRDETQL) is disordered.

It belongs to the potassium channel family. Calcium-activated (TC 1.A.1.3) subfamily. KCa4.1/KCNT1 sub-subfamily. In terms of assembly, homotetramer; which constitutes the Na(+)-activated K(+) channel. Interacts with KCNT2; these heterodimer channels differ from the homomers in their unitary conductance, kinetic behavior, subcellular localization, and response to activation of protein kinase C. In terms of processing, phosphorylated by protein kinase C. Phosphorylation of the C-terminal domain increases channel activity.

The protein localises to the cell membrane. It carries out the reaction K(+)(in) = K(+)(out). Its activity is regulated as follows. Activated by high intracellular Na(+). In addition to activation by Na(+), is cooperatively activated by intracellular Cl(-) levels. Inhibited by Zn(2+). Activated upon stimulation of G-protein coupled receptors, such as CHRM1 and GRIA1. Sodium-activated K(+) channel. Acts as an important mediator of neuronal membrane excitability. Contributes to the delayed outward currents. Regulates of neuronal bursting in sensory neurons. Contributes to synaptic development and plasticity. The chain is Potassium channel subfamily T member 1 (KCNT1) from Gallus gallus (Chicken).